Here is a 351-residue protein sequence, read N- to C-terminus: Nicotinate-nucleotide--dimethylbenzimidazole phosphoribosyltransferase (351 aa).

Catalysis depends on E317, which acts as the Proton acceptor.

The protein belongs to the CobT family.

It catalyses the reaction 5,6-dimethylbenzimidazole + nicotinate beta-D-ribonucleotide = alpha-ribazole 5'-phosphate + nicotinate + H(+). It participates in nucleoside biosynthesis; alpha-ribazole biosynthesis; alpha-ribazole from 5,6-dimethylbenzimidazole: step 1/2. In terms of biological role, catalyzes the synthesis of alpha-ribazole-5'-phosphate from nicotinate mononucleotide (NAMN) and 5,6-dimethylbenzimidazole (DMB). This is Nicotinate-nucleotide--dimethylbenzimidazole phosphoribosyltransferase from Pseudomonas fluorescens (strain SBW25).